Reading from the N-terminus, the 367-residue chain is Leu/Ile/Val-binding protein BraC3 (367 aa).

A signal peptide spans 1–22 (MTLKTLTATLVASLAFAPLAHA).

Belongs to the leucine-binding protein family. The complex is composed of two ATP-binding proteins (BraF and BraG), two transmembrane proteins (BraD and BraE) and a solute-binding protein (BraC or BraC3).

It localises to the periplasm. Functionally, part of the ABC transporter complex BraDEFGC/C3 involved in transport of branched-chain amino acids Leu, Ile and Val (LIV). Essential for the development of bacteroids, the differentiated legume-symbiotic forms of this bacterium, and for the effective N(2) fixation by them. The sequence is that of Leu/Ile/Val-binding protein BraC3 from Rhizobium johnstonii (strain DSM 114642 / LMG 32736 / 3841) (Rhizobium leguminosarum bv. viciae).